A 223-amino-acid polypeptide reads, in one-letter code: Golgi SNAP receptor complex member 1 (223 aa).

An N-acetylserine modification is found at serine 2. Topologically, residues serine 2–asparagine 204 are cytoplasmic. Serine 164 bears the Phosphoserine mark. A helical; Anchor for type IV membrane protein transmembrane segment spans residues alanine 205–threonine 222. Position 223 (tryptophan 223) is a topological domain, vesicular.

It belongs to the GOSR1 family. Component of several multiprotein Golgi SNARE complexes. Identified in a Golgi SNARE complex consisting of t-SNARES SED5, YKT6, and the v-SNARE SFT1. Interacts with BET1. Interacts with BOS1. Interacts with SEC22. Interacts with PEP12. Interacts with self.

It is found in the golgi apparatus membrane. Involved in transport from the ER to the Golgi apparatus as well as in intra-Golgi transport. It belongs to a super-family of proteins called t-SNAREs or soluble NSF (N-ethylmaleimide-sensitive factor) attachment protein receptor. Rescues alpha-factor maturation defects. The protein is Golgi SNAP receptor complex member 1 (GOS1) of Saccharomyces cerevisiae (strain ATCC 204508 / S288c) (Baker's yeast).